The sequence spans 262 residues: tRNA pseudouridine synthase A (262 aa).

The Nucleophile role is filled by Asp-51. Tyr-109 is a binding site for substrate.

This sequence belongs to the tRNA pseudouridine synthase TruA family. In terms of assembly, homodimer.

The enzyme catalyses uridine(38/39/40) in tRNA = pseudouridine(38/39/40) in tRNA. Formation of pseudouridine at positions 38, 39 and 40 in the anticodon stem and loop of transfer RNAs. The chain is tRNA pseudouridine synthase A from Aliivibrio fischeri (strain ATCC 700601 / ES114) (Vibrio fischeri).